The primary structure comprises 236 residues: 2-C-methyl-D-erythritol 4-phosphate cytidylyltransferase (236 aa).

It belongs to the IspD/TarI cytidylyltransferase family. IspD subfamily. In terms of assembly, homodimer.

It catalyses the reaction 2-C-methyl-D-erythritol 4-phosphate + CTP + H(+) = 4-CDP-2-C-methyl-D-erythritol + diphosphate. Its pathway is isoprenoid biosynthesis; isopentenyl diphosphate biosynthesis via DXP pathway; isopentenyl diphosphate from 1-deoxy-D-xylulose 5-phosphate: step 2/6. Functionally, catalyzes the formation of 4-diphosphocytidyl-2-C-methyl-D-erythritol from CTP and 2-C-methyl-D-erythritol 4-phosphate (MEP). The polypeptide is 2-C-methyl-D-erythritol 4-phosphate cytidylyltransferase (Salmonella arizonae (strain ATCC BAA-731 / CDC346-86 / RSK2980)).